We begin with the raw amino-acid sequence, 316 residues long: Protoheme IX farnesyltransferase (316 aa).

The disordered stretch occupies residues 1–21; sequence MAKSQALGNAPLTSTVAENAT. Over residues 11–21 the composition is skewed to polar residues; the sequence is PLTSTVAENAT. A run of 9 helical transmembrane segments spans residues 42–62, 67–87, 115–135, 136–156, 163–183, 189–209, 235–255, 256–276, and 295–315; these read VVAM…PGIP, VILG…FNHV, VVFA…LNAL, TAWL…VWLK, IVIG…AVTG, ALLL…ALAI, MVLL…LTGM, SGGV…GYAL, and IWHL…TSLM.

This sequence belongs to the UbiA prenyltransferase family. Protoheme IX farnesyltransferase subfamily.

It is found in the cell inner membrane. The enzyme catalyses heme b + (2E,6E)-farnesyl diphosphate + H2O = Fe(II)-heme o + diphosphate. Its pathway is porphyrin-containing compound metabolism; heme O biosynthesis; heme O from protoheme: step 1/1. Its function is as follows. Converts heme B (protoheme IX) to heme O by substitution of the vinyl group on carbon 2 of heme B porphyrin ring with a hydroxyethyl farnesyl side group. This Photobacterium profundum (strain SS9) protein is Protoheme IX farnesyltransferase.